A 228-amino-acid chain; its full sequence is Cytidylate kinase (228 aa).

An ATP-binding site is contributed by 17–25 (GPTASGKGT).

This sequence belongs to the cytidylate kinase family. Type 1 subfamily.

The protein resides in the cytoplasm. It catalyses the reaction CMP + ATP = CDP + ADP. It carries out the reaction dCMP + ATP = dCDP + ADP. The chain is Cytidylate kinase from Burkholderia vietnamiensis (strain G4 / LMG 22486) (Burkholderia cepacia (strain R1808)).